We begin with the raw amino-acid sequence, 969 residues long: Leucine--tRNA ligase (969 aa).

Positions 1-23 are disordered; the sequence is MTESPTTSPATGSGAAAPDSDAP. The 'HIGH' region signature appears at 78–89; that stretch reads PYPSGEGLHVGH. The 'KMSKS' region signature appears at 737-741; the sequence is KIGKS. Lys740 provides a ligand contact to ATP.

The protein belongs to the class-I aminoacyl-tRNA synthetase family.

It localises to the cytoplasm. It catalyses the reaction tRNA(Leu) + L-leucine + ATP = L-leucyl-tRNA(Leu) + AMP + diphosphate. This chain is Leucine--tRNA ligase, found in Mycobacterium avium (strain 104).